A 691-amino-acid polypeptide reads, in one-letter code: Elongation factor G (691 aa).

The region spanning 8 to 283 is the tr-type G domain; the sequence is KKVRNIGIAA…AVVAYLPAPD (276 aa). Residues 17-24, 81-85, and 135-138 each bind GTP; these read AHIDAGKT, DTPGH, and NKMD.

The protein belongs to the TRAFAC class translation factor GTPase superfamily. Classic translation factor GTPase family. EF-G/EF-2 subfamily.

The protein localises to the cytoplasm. Catalyzes the GTP-dependent ribosomal translocation step during translation elongation. During this step, the ribosome changes from the pre-translocational (PRE) to the post-translocational (POST) state as the newly formed A-site-bound peptidyl-tRNA and P-site-bound deacylated tRNA move to the P and E sites, respectively. Catalyzes the coordinated movement of the two tRNA molecules, the mRNA and conformational changes in the ribosome. The chain is Elongation factor G from Campylobacter jejuni subsp. jejuni serotype O:23/36 (strain 81-176).